Reading from the N-terminus, the 208-residue chain is Probable GTP-binding protein EngB (208 aa).

The EngB-type G domain maps to 23 to 205 (LTSEMVVLGR…RQTLLKHLLT (183 aa)). GTP-binding positions include 31–38 (GRSNVGKS), 57–61 (GKTRL), 84–87 (DLPG), 154–157 (TKFD), and 182–184 (FNA). Positions 38 and 59 each coordinate Mg(2+).

The protein belongs to the TRAFAC class TrmE-Era-EngA-EngB-Septin-like GTPase superfamily. EngB GTPase family. It depends on Mg(2+) as a cofactor.

Its function is as follows. Necessary for normal cell division and for the maintenance of normal septation. The protein is Probable GTP-binding protein EngB of Helicobacter pylori (strain ATCC 700392 / 26695) (Campylobacter pylori).